The following is a 498-amino-acid chain: Cytochrome P450 6B1 (498 aa).

Cys443 is a binding site for heme.

This sequence belongs to the cytochrome P450 family. Heme is required as a cofactor. Midgut microsome.

Its subcellular location is the endoplasmic reticulum membrane. It localises to the microsome membrane. The enzyme catalyses an organic molecule + reduced [NADPH--hemoprotein reductase] + O2 = an alcohol + oxidized [NADPH--hemoprotein reductase] + H2O + H(+). Enables the insect to feed on furanocoumarin-producing plants and evolved as an adaptation for detoxification of xanthotoxin and other furanocoumarins. This is Cytochrome P450 6B1 (CYP6B1) from Papilio polyxenes (Black swallowtail butterfly).